The chain runs to 561 residues: MCGIWALFGSDDCLSVQCLSAMKIAHRGPDAFRFENVNGYTNCCFGFHRLAVVDPLFGMQPIRVRKYPYLWLCYNGEIYNHKALQQRFEFEYQTNVDGEIILHLYDKGGIEKTICMLDGVFAFILLDTANKKVFLGRDTYGVRPLFKAMTEDGFLAVCSEAKGLVSLKHSTTPFLKVEPFLPGHYEVLDLKPNGKVASVEMVKYHHCTDEPLHAIYDSVEKLFPGFDLETVKNNLRILFDNAIKKRLMTDRRIGCLLSGGLDSSLVAASLLKQLKEAQVQYPLQTFAIGMEDSPDLLAARKVANYIGSEHHEVLFNSEEGIQALDEVIFSLETYDITTVRASVGMYLISKYIRKNTDSVVIFSGEGSDELTQGYIYFHKAPSPEKAEEESERLLKELYLFDVLRADRTTAAHGLELRVPFLDHRFSSYYLSLPPDMRIPKNGIEKHLLRETFEDCNLLPKEILWRPKEAFSDGITSVKNSWFKILQDYVEHQVDDEMMSAASQKFPFNTPKTKEGYFYRQIFERHYPGRADWLTHYWMPKWINATDPSARTLTHYKSAAKA.

Cys2 (for GATase activity) is an active-site residue. One can recognise a Glutamine amidotransferase type-2 domain in the interval 2–191 (CGIWALFGSD…PGHYEVLDLK (190 aa)). L-glutamine is bound by residues 49–53 (RLAVV), 75–77 (NGE), and Asp97. Residues 213 to 536 (HAIYDSVEKL…PGRADWLTHY (324 aa)) enclose the Asparagine synthetase domain. Residues Leu256, Ile288, and 363-364 (SG) contribute to the ATP site. Lys385 is subject to N6-acetyllysine. The residue at position 545 (Thr545) is a Phosphothreonine. The residue at position 557 (Ser557) is a Phosphoserine.

The catalysed reaction is L-aspartate + L-glutamine + ATP + H2O = L-asparagine + L-glutamate + AMP + diphosphate + H(+). It functions in the pathway amino-acid biosynthesis; L-asparagine biosynthesis; L-asparagine from L-aspartate (L-Gln route): step 1/1. This chain is Asparagine synthetase [glutamine-hydrolyzing] (Asns), found in Mus musculus (Mouse).